The sequence spans 87 residues: RNA-binding protein Hfq (87 aa).

In terms of domain architecture, Sm spans Asp-9 to Val-68.

It belongs to the Hfq family. In terms of assembly, homohexamer.

Its function is as follows. RNA chaperone that binds small regulatory RNA (sRNAs) and mRNAs to facilitate mRNA translational regulation in response to envelope stress, environmental stress and changes in metabolite concentrations. Also binds with high specificity to tRNAs. The chain is RNA-binding protein Hfq from Teredinibacter turnerae (strain ATCC 39867 / T7901).